The following is a 393-amino-acid chain: NAD(P)H-quinone oxidoreductase subunit H, chloroplastic (393 aa).

This sequence belongs to the complex I 49 kDa subunit family. As to quaternary structure, NDH is composed of at least 16 different subunits, 5 of which are encoded in the nucleus.

It localises to the plastid. It is found in the chloroplast thylakoid membrane. The catalysed reaction is a plastoquinone + NADH + (n+1) H(+)(in) = a plastoquinol + NAD(+) + n H(+)(out). The enzyme catalyses a plastoquinone + NADPH + (n+1) H(+)(in) = a plastoquinol + NADP(+) + n H(+)(out). In terms of biological role, NDH shuttles electrons from NAD(P)H:plastoquinone, via FMN and iron-sulfur (Fe-S) centers, to quinones in the photosynthetic chain and possibly in a chloroplast respiratory chain. The immediate electron acceptor for the enzyme in this species is believed to be plastoquinone. Couples the redox reaction to proton translocation, and thus conserves the redox energy in a proton gradient. The protein is NAD(P)H-quinone oxidoreductase subunit H, chloroplastic of Acorus calamus var. americanus (American sweet flag).